The sequence spans 120 residues: Large ribosomal subunit protein bL20 (120 aa).

Belongs to the bacterial ribosomal protein bL20 family.

Binds directly to 23S ribosomal RNA and is necessary for the in vitro assembly process of the 50S ribosomal subunit. It is not involved in the protein synthesizing functions of that subunit. The protein is Large ribosomal subunit protein bL20 of Paracidovorax citrulli (strain AAC00-1) (Acidovorax citrulli).